The following is a 522-amino-acid chain: Cytochrome P450 4F4 (522 aa).

Transmembrane regions (helical) follow at residues threonine 15–leucine 35 and glycine 87–isoleucine 107. 2 residues coordinate heme: glutamate 328 and cysteine 468.

This sequence belongs to the cytochrome P450 family. Requires heme as cofactor. Expressed in hepatocytes. High expression in liver and kidney. Lower expression in brain.

It localises to the endoplasmic reticulum membrane. Its subcellular location is the microsome membrane. The catalysed reaction is (5Z,8Z,11Z,14Z)-eicosatetraenoate + reduced [NADPH--hemoprotein reductase] + O2 = 20-hydroxy-(5Z,8Z,11Z,14Z)-eicosatetraenoate + oxidized [NADPH--hemoprotein reductase] + H2O + H(+). It catalyses the reaction leukotriene B4 + reduced [NADPH--hemoprotein reductase] + O2 = 20-hydroxy-leukotriene B4 + oxidized [NADPH--hemoprotein reductase] + H2O + H(+). The enzyme catalyses 6-trans-leukotriene B4 + reduced [NADPH--hemoprotein reductase] + O2 = 20-hydroxy-6-trans-leukotriene B4 + oxidized [NADPH--hemoprotein reductase] + H2O + H(+). It carries out the reaction prostaglandin A1 + reduced [NADPH--hemoprotein reductase] + O2 = 20-hydroxy prostaglandin A1 + oxidized [NADPH--hemoprotein reductase] + H2O + H(+). The catalysed reaction is prostaglandin E1 + reduced [NADPH--hemoprotein reductase] + O2 = 20-hydroxy prostaglandin E1 + oxidized [NADPH--hemoprotein reductase] + H2O + H(+). A cytochrome P450 monooxygenase involved in the metabolism of arachidonic acid and its oxygenated derivatives. Mechanistically, uses molecular oxygen inserting one oxygen atom into a substrate, and reducing the second into a water molecule, with two electrons provided by NADPH via cytochrome P450 reductase (CPR; NADPH-ferrihemoprotein reductase). Participates in the conversion of arachidonic acid to omega-hydroxyeicosatetraenoic acid (20-HETE), a signaling molecule acting both as vasoconstrictive and natriuretic with overall effect on arterial blood pressure. Hydroxylates the terminal carbon (omega-hydroxylation) of inflammatory lipid mediators, including prostaglandin (PG) A1, PGE1 and leukotriene B4 (LTB4), and may play a role in inactivation of these oxylipins during the resolution of inflammation. The sequence is that of Cytochrome P450 4F4 from Rattus norvegicus (Rat).